We begin with the raw amino-acid sequence, 143 residues long: Transcriptional regulator MraZ (143 aa).

SpoVT-AbrB domains follow at residues 5–47 (EFLH…PMDE) and 76–119 (AIEC…ANDA).

The protein belongs to the MraZ family. In terms of assembly, forms oligomers.

Its subcellular location is the cytoplasm. It is found in the nucleoid. The polypeptide is Transcriptional regulator MraZ (Oceanobacillus iheyensis (strain DSM 14371 / CIP 107618 / JCM 11309 / KCTC 3954 / HTE831)).